A 156-amino-acid polypeptide reads, in one-letter code: Small ribosomal subunit protein uS7 (156 aa).

The protein belongs to the universal ribosomal protein uS7 family. As to quaternary structure, part of the 30S ribosomal subunit. Contacts proteins S9 and S11.

Its function is as follows. One of the primary rRNA binding proteins, it binds directly to 16S rRNA where it nucleates assembly of the head domain of the 30S subunit. Is located at the subunit interface close to the decoding center, probably blocks exit of the E-site tRNA. The protein is Small ribosomal subunit protein uS7 of Synechococcus sp. (strain CC9605).